A 164-amino-acid chain; its full sequence is Large ribosomal subunit protein uL11 (164 aa).

It belongs to the universal ribosomal protein uL11 family. In terms of assembly, part of the ribosomal stalk of the 50S ribosomal subunit. Interacts with L10 and the large rRNA to form the base of the stalk. L10 forms an elongated spine to which L12 dimers bind in a sequential fashion forming a multimeric L10(L12)X complex.

Forms part of the ribosomal stalk which helps the ribosome interact with GTP-bound translation factors. The polypeptide is Large ribosomal subunit protein uL11 (Pyrococcus furiosus (strain ATCC 43587 / DSM 3638 / JCM 8422 / Vc1)).